The following is a 180-amino-acid chain: Cytidylate kinase 2 (180 aa).

7–15 (GKSGCGNTT) contacts ATP.

This sequence belongs to the cytidylate kinase family. Type 2 subfamily.

It localises to the cytoplasm. It catalyses the reaction CMP + ATP = CDP + ADP. The catalysed reaction is dCMP + ATP = dCDP + ADP. This chain is Cytidylate kinase 2 (cmk2), found in Borreliella burgdorferi (strain ATCC 35210 / DSM 4680 / CIP 102532 / B31) (Borrelia burgdorferi).